The primary structure comprises 195 residues: Probable nicotinate-nucleotide adenylyltransferase (195 aa).

The protein belongs to the NadD family.

It carries out the reaction nicotinate beta-D-ribonucleotide + ATP + H(+) = deamido-NAD(+) + diphosphate. It participates in cofactor biosynthesis; NAD(+) biosynthesis; deamido-NAD(+) from nicotinate D-ribonucleotide: step 1/1. Its function is as follows. Catalyzes the reversible adenylation of nicotinate mononucleotide (NaMN) to nicotinic acid adenine dinucleotide (NaAD). The chain is Probable nicotinate-nucleotide adenylyltransferase from Dictyoglomus thermophilum (strain ATCC 35947 / DSM 3960 / H-6-12).